We begin with the raw amino-acid sequence, 392 residues long: Speckle-type POZ protein-like A (392 aa).

Residues Lys-31–Val-161 enclose the MATH domain. The region spanning Thr-200 to Glu-267 is the BTB domain.

It belongs to the Tdpoz family. As to quaternary structure, homodimer. Heterodimer with SPOP. Component of cullin-RING-based BCR (BTB-CUL3-RBX1) E3 ubiquitin-protein ligase complexes containing homodimeric SPOPL or the heterodimer formed by SPOP and SPOPL.

The protein localises to the nucleus. The protein operates within protein modification; protein ubiquitination. Component of a cullin-RING-based BCR (BTB-CUL3-RBX1) E3 ubiquitin-protein ligase complex that mediates the ubiquitination and subsequent proteasomal degradation of target proteins, but with relatively low efficiency. The protein is Speckle-type POZ protein-like A (spopla) of Danio rerio (Zebrafish).